The primary structure comprises 208 residues: Cytidylate kinase (208 aa).

7-15 (GPAASGKGT) contacts ATP.

The protein belongs to the cytidylate kinase family. Type 1 subfamily.

The protein resides in the cytoplasm. It catalyses the reaction CMP + ATP = CDP + ADP. It carries out the reaction dCMP + ATP = dCDP + ADP. This chain is Cytidylate kinase, found in Xanthobacter autotrophicus (strain ATCC BAA-1158 / Py2).